Consider the following 296-residue polypeptide: GTPase Era (296 aa).

An Era-type G domain is found at 3–170; it reads KSGFITIVGR…LELMVKYLPE (168 aa). Positions 11–18 are G1; it reads GRPNVGKS. Position 11–18 (11–18) interacts with GTP; the sequence is GRPNVGKS. The interval 37–41 is G2; that stretch reads QTTRN. The interval 58–61 is G3; the sequence is DTPG. Residues 58–62 and 120–123 contribute to the GTP site; these read DTPGI and NKVD. A G4 region spans residues 120–123; that stretch reads NKVD. Residues 149–151 are G5; sequence ISA. A KH type-2 domain is found at 201–278; that stretch reads LSQEVPHGIA…NIKIWVKVRK (78 aa).

It belongs to the TRAFAC class TrmE-Era-EngA-EngB-Septin-like GTPase superfamily. Era GTPase family. In terms of assembly, monomer.

The protein localises to the cytoplasm. The protein resides in the cell membrane. An essential GTPase that binds both GDP and GTP, with rapid nucleotide exchange. Plays a role in 16S rRNA processing and 30S ribosomal subunit biogenesis and possibly also in cell cycle regulation and energy metabolism. This chain is GTPase Era, found in Clostridium perfringens (strain ATCC 13124 / DSM 756 / JCM 1290 / NCIMB 6125 / NCTC 8237 / Type A).